The primary structure comprises 365 residues: Protein RecA (365 aa).

G76–T83 is a binding site for ATP. Residues D346–A365 form a disordered region. Acidic residues predominate over residues D353 to A365.

Belongs to the RecA family.

The protein localises to the cytoplasm. In terms of biological role, can catalyze the hydrolysis of ATP in the presence of single-stranded DNA, the ATP-dependent uptake of single-stranded DNA by duplex DNA, and the ATP-dependent hybridization of homologous single-stranded DNAs. It interacts with LexA causing its activation and leading to its autocatalytic cleavage. The chain is Protein RecA from Parvibaculum lavamentivorans (strain DS-1 / DSM 13023 / NCIMB 13966).